We begin with the raw amino-acid sequence, 332 residues long: DNA-directed RNA polymerase subunit alpha (332 aa).

Residues 1–234 (MIEYVIPKKL…NHLQIITDSL (234 aa)) form an alpha N-terminal domain (alpha-NTD) region. The segment at 264 to 332 (AVYSKKIDEL…KFGLSLKKGG (69 aa)) is alpha C-terminal domain (alpha-CTD).

The protein belongs to the RNA polymerase alpha chain family. As to quaternary structure, homodimer. The RNAP catalytic core consists of 2 alpha, 1 beta, 1 beta' and 1 omega subunit. When a sigma factor is associated with the core the holoenzyme is formed, which can initiate transcription.

It carries out the reaction RNA(n) + a ribonucleoside 5'-triphosphate = RNA(n+1) + diphosphate. In terms of biological role, DNA-dependent RNA polymerase catalyzes the transcription of DNA into RNA using the four ribonucleoside triphosphates as substrates. In Pseudothermotoga lettingae (strain ATCC BAA-301 / DSM 14385 / NBRC 107922 / TMO) (Thermotoga lettingae), this protein is DNA-directed RNA polymerase subunit alpha.